Reading from the N-terminus, the 223-residue chain is MSEQNELNTLKSRFRGYFPVVIDVETAGFNAKTDALLEICAVTLQMDEDGWLKPASTIHFHVAPFEGAVLHKEALEFNGIRDPFSPLRGAVSEETALKEIYKQIRKEQKTADCSRAIMVAHNANFDHSFVMEASERARLKRNPFHPFATFDTAALSGLAFGQTVLAKACKTAGIAFDNKEAHSALYDTERTAELFCEIVNKWKKLGGWPLFESQTEEIDKSQN.

Residues 20 to 195 (VVIDVETAGF…YDTERTAELF (176 aa)) enclose the Exonuclease domain. Mg(2+)-binding residues include aspartate 23, glutamate 25, histidine 182, and aspartate 187. Catalysis depends on histidine 182, which acts as the Proton donor/acceptor.

It belongs to the RNase T family. Homodimer. It depends on Mg(2+) as a cofactor.

Trims short 3' overhangs of a variety of RNA species, leaving a one or two nucleotide 3' overhang. Responsible for the end-turnover of tRNA: specifically removes the terminal AMP residue from uncharged tRNA (tRNA-C-C-A). Also appears to be involved in tRNA biosynthesis. This is Ribonuclease T from Photobacterium profundum (strain SS9).